Here is a 78-residue protein sequence, read N- to C-terminus: Antitoxin FitA (78 aa).

Homodimer in the absence of FitB; forms a heterodimer with FitB; 4 FitAB heterodimers form a complex that binds to fitAB promoter DNA. The complex is also seen in solution.

Functionally, antitoxin component of a type II toxin-antitoxin (TA) system. Plays a role in the speed with which bacteria traverse human epithelial cells; disruption of the locus increases the speed of trafficking about 2-4-fold. Binds to its own promoter, binding affinity of the FitAB complex is 20-30-fold higher than FitA alone. No nuclease activity was observed for the FitAB complex, perhaps because FitA (the antitoxin) prevents metal binding and thus catalysis by FitB. The polypeptide is Antitoxin FitA (fitA) (Neisseria gonorrhoeae (strain ATCC 700825 / FA 1090)).